A 439-amino-acid polypeptide reads, in one-letter code: tRNA modification GTPase MnmE (439 aa).

(6S)-5-formyl-5,6,7,8-tetrahydrofolate-binding residues include R24, E81, and K121. The TrmE-type G domain occupies G218–E363. N228 serves as a coordination point for K(+). Residues N228–S233, T247–T253, and D272–G275 each bind GTP. S232 is a binding site for Mg(2+). Residues T247, I249, and T252 each coordinate K(+). Mg(2+) is bound at residue T253. K439 serves as a coordination point for (6S)-5-formyl-5,6,7,8-tetrahydrofolate.

The protein belongs to the TRAFAC class TrmE-Era-EngA-EngB-Septin-like GTPase superfamily. TrmE GTPase family. As to quaternary structure, homodimer. Heterotetramer of two MnmE and two MnmG subunits. The cofactor is K(+).

The protein resides in the cytoplasm. In terms of biological role, exhibits a very high intrinsic GTPase hydrolysis rate. Involved in the addition of a carboxymethylaminomethyl (cmnm) group at the wobble position (U34) of certain tRNAs, forming tRNA-cmnm(5)s(2)U34. The protein is tRNA modification GTPase MnmE of Rhizobium johnstonii (strain DSM 114642 / LMG 32736 / 3841) (Rhizobium leguminosarum bv. viciae).